The sequence spans 247 residues: UPF0309 protein lin2794 (247 aa).

An SIS domain is found at 31–214 (VAESIENDGV…EKMVNDNFTP (184 aa)).

It belongs to the UPF0309 family.

The sequence is that of UPF0309 protein lin2794 from Listeria innocua serovar 6a (strain ATCC BAA-680 / CLIP 11262).